Consider the following 503-residue polypeptide: Cytochrome P450 monooxygenase lnbC (503 aa).

Residues 14–34 (VVLLLSSVWIAVHLVLAAYNV) form a helical membrane-spanning segment. Residues Asn94 and Asn169 are each glycosylated (N-linked (GlcNAc...) asparagine). A heme-binding site is contributed by Cys446.

The protein belongs to the cytochrome P450 family. It depends on heme as a cofactor.

It is found in the membrane. It functions in the pathway secondary metabolite biosynthesis. Its function is as follows. Cytochrome P450 monooxygenase; part of the lnb gene cluster that mediates the biosynthesis of diastereomeric piperazines. Lna and lnb clusters encode sets of enzymes that produce overlapping sets of previously undescribed metabolites such as piperazinomycin-like metabolites or morpholine. The lna and lnb biosynthetic pathways appear to be part of a signaling network that controls the formation of sclerotia, a resilient overwintering structure. One primary function of the non-canonical nonribosomal peptide synthetases lnaA and lnbA consists in the reduction of L-tyrosine. The presence in the clusters of tailoring enzymes such as the oxidoreductases lnaB, lnbB, lnaE or lnbE, as well as of the cytochrome P450 monooxygenases lnaC, lnaD, or lnbC, might explain formation of various diastereomeric piperazines. In Aspergillus flavus (strain ATCC 200026 / FGSC A1120 / IAM 13836 / NRRL 3357 / JCM 12722 / SRRC 167), this protein is Cytochrome P450 monooxygenase lnbC.